A 431-amino-acid polypeptide reads, in one-letter code: Glutamate-1-semialdehyde 2,1-aminomutase 1 (431 aa).

Lys268 is subject to N6-(pyridoxal phosphate)lysine.

This sequence belongs to the class-III pyridoxal-phosphate-dependent aminotransferase family. HemL subfamily. As to quaternary structure, homodimer. Pyridoxal 5'-phosphate is required as a cofactor.

It localises to the cytoplasm. It catalyses the reaction (S)-4-amino-5-oxopentanoate = 5-aminolevulinate. It functions in the pathway porphyrin-containing compound metabolism; protoporphyrin-IX biosynthesis; 5-aminolevulinate from L-glutamyl-tRNA(Glu): step 2/2. The polypeptide is Glutamate-1-semialdehyde 2,1-aminomutase 1 (Anoxybacillus flavithermus (strain DSM 21510 / WK1)).